The chain runs to 436 residues: Probable 4-aminobutyrate aminotransferase (436 aa).

At Lys-281 the chain carries N6-(pyridoxal phosphate)lysine.

Belongs to the class-III pyridoxal-phosphate-dependent aminotransferase family. Pyridoxal 5'-phosphate serves as cofactor.

The enzyme catalyses 4-aminobutanoate + 2-oxoglutarate = succinate semialdehyde + L-glutamate. It catalyses the reaction (S)-3-amino-2-methylpropanoate + 2-oxoglutarate = 2-methyl-3-oxopropanoate + L-glutamate. Its pathway is amino-acid degradation; 4-aminobutanoate degradation. The sequence is that of Probable 4-aminobutyrate aminotransferase (gabT) from Bacillus subtilis (strain 168).